The following is a 281-amino-acid chain: Probable endonuclease 4 (281 aa).

9 residues coordinate Zn(2+): H69, H109, E145, D179, H182, H216, D229, H231, and E261.

Belongs to the AP endonuclease 2 family. Requires Zn(2+) as cofactor.

It carries out the reaction Endonucleolytic cleavage to 5'-phosphooligonucleotide end-products.. Its function is as follows. Endonuclease IV plays a role in DNA repair. It cleaves phosphodiester bonds at apurinic or apyrimidinic (AP) sites, generating a 3'-hydroxyl group and a 5'-terminal sugar phosphate. The polypeptide is Probable endonuclease 4 (Pectobacterium carotovorum subsp. carotovorum (strain PC1)).